The primary structure comprises 239 residues: MLEIGFCTLEDQCPYLKDKRSRIEYNYIENCPKEINNELIKRGWRRFGRYFSRPICKDCDECLSLRILVNEYNFSRSERRVVNKNINTKVILRTPNLSNEHLFLYDKYHRFMEEKKNWKRYDLSFKQYYNLYVDGFMNFGYELAFYIEDKLVCVDLIDILEDGISSIYCFYDPDFSYFSLGKFSLLNEIQIAKKMNLDYIYLGYFVKKCQSLSYKADYTPNEILKGTKELFENEVLWEK.

This sequence belongs to the R-transferase family. Bpt subfamily.

Its subcellular location is the cytoplasm. The catalysed reaction is N-terminal L-glutamyl-[protein] + L-leucyl-tRNA(Leu) = N-terminal L-leucyl-L-glutamyl-[protein] + tRNA(Leu) + H(+). It carries out the reaction N-terminal L-aspartyl-[protein] + L-leucyl-tRNA(Leu) = N-terminal L-leucyl-L-aspartyl-[protein] + tRNA(Leu) + H(+). Functions in the N-end rule pathway of protein degradation where it conjugates Leu from its aminoacyl-tRNA to the N-termini of proteins containing an N-terminal aspartate or glutamate. The chain is Aspartate/glutamate leucyltransferase from Campylobacter jejuni (strain RM1221).